Here is a 150-residue protein sequence, read N- to C-terminus: Large ribosomal subunit protein bL9 (150 aa).

It belongs to the bacterial ribosomal protein bL9 family.

Its function is as follows. Binds to the 23S rRNA. This chain is Large ribosomal subunit protein bL9, found in Idiomarina loihiensis (strain ATCC BAA-735 / DSM 15497 / L2-TR).